Here is a 180-residue protein sequence, read N- to C-terminus: uncharacterized protein (180 aa).

The segment covering 114-136 (DKISESDSLPDEYKEYVVKHDSD) has biased composition (basic and acidic residues). The disordered stretch occupies residues 114–180 (DKISESDSLP…NFDNPDDNPK (67 aa)). Residues 137–146 (NSDNDSDNSD) show a composition bias toward acidic residues. Positions 147 to 173 (NDSNNSDNDSNNSDSDSDNSNDPNNFD) are enriched in low complexity.

This is an uncharacterized protein from Acanthamoeba polyphaga (Amoeba).